Reading from the N-terminus, the 346-residue chain is Sulfate/thiosulfate import ATP-binding protein CysA (346 aa).

Positions 3 to 237 (VRVANVRKEF…PNSPFVYGFI (235 aa)) constitute an ABC transporter domain. An ATP-binding site is contributed by 35-42 (GPSGSGKT).

It belongs to the ABC transporter superfamily. Sulfate/tungstate importer (TC 3.A.1.6) family. The complex is composed of two ATP-binding proteins (CysA), two transmembrane proteins (CysT and CysW) and a solute-binding protein (CysP).

It localises to the cell inner membrane. It carries out the reaction sulfate(out) + ATP + H2O = sulfate(in) + ADP + phosphate + H(+). The catalysed reaction is thiosulfate(out) + ATP + H2O = thiosulfate(in) + ADP + phosphate + H(+). Its function is as follows. Part of the ABC transporter complex CysAWTP involved in sulfate/thiosulfate import. Responsible for energy coupling to the transport system. This Mesorhizobium japonicum (strain LMG 29417 / CECT 9101 / MAFF 303099) (Mesorhizobium loti (strain MAFF 303099)) protein is Sulfate/thiosulfate import ATP-binding protein CysA.